A 368-amino-acid chain; its full sequence is MRIVLDASGGDHAPQATVAGAIAAARTWGDQIILVGDEASIRAELAKHDTSNLDLPVVNAPEMIEMTEHPAQAIRRKRNSSVAIGLRLVRDGEADAFVSAGHSGATMAGALFILGRIRGIERPCLVTHFPTVHGHALLLDSGATTDCKPEYLVQFAQMGNVYAQKIVNIAMPRIGLLANGEEANKGDKLVQDTHVLLQQRSDLTFIGNVEPKDMLINGSADVVVADGFVGNLVLKFGEGVFKMITTAASNNIKAEWRKNLVLGLLPALVALTLPGKGRWRALIAGLTGLTLPASMAVAPLLALRKRMDYRSHGGAPLLGVNGIAIVAHGKSDALAIQNAIGQARNAVEQRVVATISHALETVELVPSA.

The protein belongs to the PlsX family. Homodimer. Probably interacts with PlsY.

It localises to the cytoplasm. It catalyses the reaction a fatty acyl-[ACP] + phosphate = an acyl phosphate + holo-[ACP]. It participates in lipid metabolism; phospholipid metabolism. In terms of biological role, catalyzes the reversible formation of acyl-phosphate (acyl-PO(4)) from acyl-[acyl-carrier-protein] (acyl-ACP). This enzyme utilizes acyl-ACP as fatty acyl donor, but not acyl-CoA. This chain is Phosphate acyltransferase, found in Herpetosiphon aurantiacus (strain ATCC 23779 / DSM 785 / 114-95).